The chain runs to 388 residues: Chorismate synthase (388 aa).

NADP(+) is bound by residues Arg39 and Arg45. FMN contacts are provided by residues 132–134 (RSS), 251–252 (NA), Gly296, 311–315 (KPIPT), and Arg337.

It belongs to the chorismate synthase family. Homotetramer. It depends on FMNH2 as a cofactor.

The enzyme catalyses 5-O-(1-carboxyvinyl)-3-phosphoshikimate = chorismate + phosphate. Its pathway is metabolic intermediate biosynthesis; chorismate biosynthesis; chorismate from D-erythrose 4-phosphate and phosphoenolpyruvate: step 7/7. In terms of biological role, catalyzes the anti-1,4-elimination of the C-3 phosphate and the C-6 proR hydrogen from 5-enolpyruvylshikimate-3-phosphate (EPSP) to yield chorismate, which is the branch point compound that serves as the starting substrate for the three terminal pathways of aromatic amino acid biosynthesis. This reaction introduces a second double bond into the aromatic ring system. The sequence is that of Chorismate synthase from Staphylococcus epidermidis (strain ATCC 35984 / DSM 28319 / BCRC 17069 / CCUG 31568 / BM 3577 / RP62A).